A 492-amino-acid polypeptide reads, in one-letter code: Rab5 GDP/GTP exchange factor (492 aa).

Residues 1–74 form an interaction with ubiquitinated proteins region; sequence MSLKSERRGI…EEEAFASSQS (74 aa). The A20-type zinc-finger motif lies at 13–47; it reads DQSELLCKKGCGYYGNPAWQGFCSKCWREEYHKAR. Zn(2+) is bound by residues cysteine 19, cysteine 23, cysteine 35, and cysteine 38. A disordered region spans residues 66–85; that stretch reads EEAFASSQSSQGAQSLTFSK. A compositionally biased stretch (low complexity) spans 69 to 84; that stretch reads FASSQSSQGAQSLTFS. 2 positions are modified to phosphoserine: serine 125 and serine 133. N6-acetyllysine occurs at positions 152 and 171. One can recognise a VPS9 domain in the interval 233-376; the sequence is EKKDLAIQKR…IEKLDAQSLN (144 aa). Phosphoserine occurs at positions 374, 378, 391, and 401. A coiled-coil region spans residues 408 to 449; the sequence is VKQMYKNLDLLSQLNERQERIMNEAKKLEKDLIDWTDGIAKE. Residues 471–492 are disordered; that stretch reads IDSENVENDKLPPPLQPQVYAG.

Heterodimer with RABEP1. The heterodimer binds RAB4A and RAB5A that have been activated by GTP-binding. Binds TSC2, GGA1, GGA2, GGA3, AP1G1 and AP1G2. Interacts with RAB21, and with 100-fold lower affinity also with RAB22. Interacts with ubiquitinated EGFR. Interacts with RGS14; the interaction is GTP-dependent. Monoubiquitinated. Detected in brain.

It is found in the cytoplasm. It localises to the early endosome. The protein resides in the recycling endosome. Functionally, rab effector protein acting as linker between gamma-adaptin and RAB5A. Involved in endocytic membrane fusion and membrane trafficking of recycling endosomes. Stimulates nucleotide exchange on RAB5A. Can act as a ubiquitin ligase. The chain is Rab5 GDP/GTP exchange factor (RABGEF1) from Bos taurus (Bovine).